We begin with the raw amino-acid sequence, 203 residues long: Thymidylate kinase (203 aa).

Residue 14–21 (GMDGIGKS) participates in ATP binding.

This sequence belongs to the thymidylate kinase family.

It carries out the reaction dTMP + ATP = dTDP + ADP. Its function is as follows. Phosphorylation of dTMP to form dTDP in both de novo and salvage pathways of dTTP synthesis. The protein is Thymidylate kinase of Rickettsia typhi (strain ATCC VR-144 / Wilmington).